A 255-amino-acid chain; its full sequence is F-box/SPRY domain-containing protein 1 (255 aa).

Residues 3–51 (DPVAALCNYNVLEVIFSYLELDDLSHCSQVCKSWYHFLNDENSDVWRWH) form the F-box domain. In terms of domain architecture, B30.2/SPRY spans 61–253 (LKSDLLSSVS…VSMVYLGTPL (193 aa)).

Belongs to the FBXO45/Fsn family. In terms of assembly, component of an E3 ubiquitin ligase complex composed of hiw and Fsn.

The protein localises to the synapse. Its pathway is protein modification; protein ubiquitination. Its function is as follows. Required in the presynaptic motoneuron to down-regulate the levels of wnd and restrain synaptic terminal growth at the neuromuscular junction (NMJ). This Drosophila simulans (Fruit fly) protein is F-box/SPRY domain-containing protein 1.